A 358-amino-acid chain; its full sequence is Peptide chain release factor 2 (358 aa).

Q242 carries the N5-methylglutamine modification.

The protein belongs to the prokaryotic/mitochondrial release factor family. Methylated by PrmC. Methylation increases the termination efficiency of RF2.

Its subcellular location is the cytoplasm. Its function is as follows. Peptide chain release factor 2 directs the termination of translation in response to the peptide chain termination codons UGA and UAA. This chain is Peptide chain release factor 2 (prfB), found in Borreliella burgdorferi (strain ATCC 35210 / DSM 4680 / CIP 102532 / B31) (Borrelia burgdorferi).